A 317-amino-acid polypeptide reads, in one-letter code: Carbonic anhydrase 6 (317 aa).

An N-terminal signal peptide occupies residues 1-17; the sequence is MRALVSVVSLFFLGIQA. The Alpha-carbonic anhydrase domain occupies 19-277; that stretch reads SDWSYSGDDG…NNHRVVEANF (259 aa). Cysteine 41 and cysteine 223 are disulfide-bonded. The Proton donor/acceptor role is filled by histidine 84. Zn(2+)-binding residues include histidine 110, histidine 112, and histidine 137. Substrate is bound at residue 219–220; the sequence is TT. A glycan (N-linked (GlcNAc...) asparagine) is linked at asparagine 255.

Belongs to the alpha-carbonic anhydrase family. Zn(2+) serves as cofactor. Major constituent of saliva.

Its subcellular location is the secreted. It carries out the reaction hydrogencarbonate + H(+) = CO2 + H2O. Functionally, reversible hydration of carbon dioxide. Its role in saliva is unknown. The chain is Carbonic anhydrase 6 (Ca6) from Mus musculus (Mouse).